The following is a 238-amino-acid chain: Probable transcriptional regulatory protein SMU_1789c (238 aa).

It belongs to the TACO1 family. YeeN subfamily.

The protein localises to the cytoplasm. This is Probable transcriptional regulatory protein SMU_1789c from Streptococcus mutans serotype c (strain ATCC 700610 / UA159).